The chain runs to 82 residues: U16-lycotoxin-Ls1b (82 aa).

Positions 1–22 (MSPKVQALLLLVGLITFLEVHA) are cleaved as a signal peptide. Residues 23-34 (EEELSETVESER) constitute a propeptide that is removed on maturation. Cystine bridges form between cysteine 36–cysteine 51, cysteine 43–cysteine 56, cysteine 50–cysteine 67, and cysteine 58–cysteine 65.

The protein belongs to the neurotoxin 02 (plectoxin) family. 04 (U16-lycotoxin) subfamily. In terms of tissue distribution, expressed by the venom gland.

The protein localises to the secreted. This is U16-lycotoxin-Ls1b from Lycosa singoriensis (Wolf spider).